Reading from the N-terminus, the 1669-residue chain is Collagen alpha-1(IV) chain (1669 aa).

Positions 1–27 are cleaved as a signal peptide; that stretch reads MGPRLSVWLLLLFAALLLHEERSRAAA. The propeptide at 28 to 172 is N-terminal propeptide (7S domain); that stretch reads KGDCGGSGCG…LGHVPGTLLK (145 aa). A disordered region spans residues 47–1443; that stretch reads QKGERGLPGL…MGPPGTPSVD (1397 aa). Residues 92–104 show a composition bias toward low complexity; sequence TRGPPGAAGYPGN. Asn-126 is a glycosylation site (N-linked (GlcNAc...) asparagine). Residues 173 to 1440 form a triple-helical region region; sequence GERGFPGIPG…PGSMGPPGTP (1268 aa). The span at 196–214 shows a compositional bias: pro residues; that stretch reads VGPPGFTGPPGPPGPPGPP. A 3-hydroxyproline mark is found at Pro-204, Pro-207, and Pro-210. The span at 234–247 shows a compositional bias: low complexity; the sequence is QGVSGPPGVPGQAQ. The segment covering 289–298 has biased composition (basic and acidic residues); it reads PGKDGEKGER. A compositionally biased stretch (pro residues) spans 367 to 376; sequence PGQPGPPGFP. Positions 377–387 are enriched in low complexity; that stretch reads TPGQAGAPGFP. Pro residues-rich tracts occupy residues 413-424 and 436-448; these read PGPPGPPGPPGQ and PGPP…PGTP. The span at 485 to 494 shows a compositional bias: low complexity; that stretch reads PGEIGFPGQP. Composition is skewed to basic and acidic residues over residues 497–508 and 535–545; these read KGDRGLPGRDGL and FDMRLKGDKGD. Residues 586-595 are compositionally biased toward gly residues; sequence GPPGGVGFPG. 3-hydroxyproline is present on residues Pro-587 and Pro-602. Pro-603 carries the post-translational modification 4-hydroxyproline. Pro-605 is subject to 3-hydroxyproline. Residue Pro-606 is modified to 4-hydroxyproline. Low complexity predominate over residues 611 to 620; the sequence is IGPVGEKGQA. The segment covering 621-630 has biased composition (gly residues); it reads GFPGGPGSPG. Residues Pro-623, Pro-626, Pro-629, and Pro-632 each carry the 4-hydroxyproline modification. Residue Pro-647 is modified to 3-hydroxyproline. A compositionally biased stretch (low complexity) spans 715–731; the sequence is RPGFNGLPGNPGPQGQK. Residues 758-767 are compositionally biased toward gly residues; it reads GSIGGPGVPG. A compositionally biased stretch (pro residues) spans 784–802; sequence PGPPGVQGPAGPPGVPGIG. Residues 803–817 show a composition bias toward gly residues; that stretch reads PPGAMGPPGGQGPPG. Composition is skewed to low complexity over residues 847 to 875 and 994 to 1003; these read SQGL…PGFP and DPGLSGTPGS. The segment covering 1011-1020 has biased composition (gly residues); that stretch reads GSVGGMGLPG. Pro-1214 carries the post-translational modification 3-hydroxyproline. Residues 1220–1230 show a composition bias toward low complexity; sequence QPGLPGTPGHP. Positions 1247–1258 are enriched in pro residues; sequence PGHPGPMGPPGF. Residues 1290 to 1299 are compositionally biased toward gly residues; the sequence is GMPGIGGSPG. 3 stretches are compositionally biased toward low complexity: residues 1333 to 1343, 1368 to 1391, and 1398 to 1412; these read DQGVPGPKGLQ, PGLK…SVGL, and PGFD…ETGP. A compositionally biased stretch (pro residues) spans 1413-1428; the sequence is FGPPGPRGFPGPPGPD. Pro-1424 carries the post-translational modification 3-hydroxyproline. In terms of domain architecture, Collagen IV NC1 spans 1445–1669; the sequence is GFLVTRHSQT…SRCQVCMRRT (225 aa). 6 disulfide bridges follow: Cys-1460-Cys-1551, Cys-1493-Cys-1548, Cys-1505-Cys-1511, Cys-1570-Cys-1665, Cys-1604-Cys-1662, and Cys-1616-Cys-1622. Residue Met-1533 forms an S-Lysyl-methionine sulfilimine (Met-Lys) (interchain with K-1651) linkage. Residue Lys-1651 forms an S-Lysyl-methionine sulfilimine (Lys-Met) (interchain with M-1533) linkage.

The protein belongs to the type IV collagen family. In terms of assembly, there are six type IV collagen isoforms, alpha 1(IV)-alpha 6(IV), each of which can form a triple helix structure with 2 other chains to generate type IV collagen network. Interacts with EFEMP2. Post-translationally, lysines at the third position of the tripeptide repeating unit (G-X-Y) are hydroxylated. The modified lysines can be O-glycosylated. Contains 4-hydroxyproline. Prolines at the third position of the tripeptide repeating unit (G-X-Y) are hydroxylated in some or all of the chains. In terms of processing, contains 3-hydroxyproline. This modification occurs on the first proline residue in the sequence motif Gly-Pro-Hyp, where Hyp is 4-hydroxyproline. Post-translationally, type IV collagens contain numerous cysteine residues which are involved in inter- and intramolecular disulfide bonding. 12 of these, located in the NC1 domain, are conserved in all known type IV collagens. The trimeric structure of the NC1 domains is stabilized by covalent bonds (sulfilimine cross-links) between Lys and Met residues. These cross-links are important for the mechanical stability of the basement membrane. Sulfilimine cross-link is catalyzed by PXDN. In terms of processing, proteolytic processing produces the C-terminal NC1 peptide, arresten. In terms of tissue distribution, detected in the basement membrane of the cornea (at protein level).

Its subcellular location is the secreted. The protein resides in the extracellular space. It localises to the extracellular matrix. It is found in the basement membrane. Its function is as follows. Type IV collagen is the major structural component of glomerular basement membranes (GBM), forming a 'chicken-wire' meshwork together with laminins, proteoglycans and entactin/nidogen. Functionally, arresten, comprising the C-terminal NC1 domain, inhibits angiogenesis and tumor formation. The C-terminal half is found to possess the anti-angiogenic activity. Specifically inhibits endothelial cell proliferation, migration and tube formation. The protein is Collagen alpha-1(IV) chain of Mus musculus (Mouse).